Here is a 157-residue protein sequence, read N- to C-terminus: UPF0756 membrane protein BH3161 (157 aa).

4 helical membrane-spanning segments follow: residues 1-21 (MISQ…LAKN), 54-74 (LGVT…EIGF), 87-107 (WVAL…IDLL), and 117-137 (LVLG…GPLI).

This sequence belongs to the UPF0756 family.

It is found in the cell membrane. The chain is UPF0756 membrane protein BH3161 from Halalkalibacterium halodurans (strain ATCC BAA-125 / DSM 18197 / FERM 7344 / JCM 9153 / C-125) (Bacillus halodurans).